The primary structure comprises 357 residues: Histidinol-phosphate aminotransferase (357 aa).

Lys218 carries the N6-(pyridoxal phosphate)lysine modification.

This sequence belongs to the class-II pyridoxal-phosphate-dependent aminotransferase family. Histidinol-phosphate aminotransferase subfamily. In terms of assembly, homodimer. It depends on pyridoxal 5'-phosphate as a cofactor.

It carries out the reaction L-histidinol phosphate + 2-oxoglutarate = 3-(imidazol-4-yl)-2-oxopropyl phosphate + L-glutamate. It participates in amino-acid biosynthesis; L-histidine biosynthesis; L-histidine from 5-phospho-alpha-D-ribose 1-diphosphate: step 7/9. The protein is Histidinol-phosphate aminotransferase of Prosthecochloris aestuarii (strain DSM 271 / SK 413).